A 277-amino-acid chain; its full sequence is Sulfur carrier protein FdhD (277 aa).

Catalysis depends on Cys-121, which acts as the Cysteine persulfide intermediate. Residue 260 to 265 (FCKPGR) coordinates Mo-bis(molybdopterin guanine dinucleotide).

It belongs to the FdhD family.

The protein resides in the cytoplasm. Its function is as follows. Required for formate dehydrogenase (FDH) activity. Acts as a sulfur carrier protein that transfers sulfur from IscS to the molybdenum cofactor prior to its insertion into FDH. The protein is Sulfur carrier protein FdhD of Escherichia coli O81 (strain ED1a).